The sequence spans 239 residues: Large ribosomal subunit protein uL2 (239 aa).

Positions 200–239 are disordered; the sequence is VNHPHGGKEHHIGRPSTVSRRAPPGRKVGHIAARRTGRRK. Over residues 222-239 the composition is skewed to basic residues; the sequence is PPGRKVGHIAARRTGRRK.

Belongs to the universal ribosomal protein uL2 family. In terms of assembly, part of the 50S ribosomal subunit. Forms a bridge to the 30S subunit in the 70S ribosome.

Functionally, one of the primary rRNA binding proteins. Required for association of the 30S and 50S subunits to form the 70S ribosome, for tRNA binding and peptide bond formation. It has been suggested to have peptidyltransferase activity; this is somewhat controversial. Makes several contacts with the 16S rRNA in the 70S ribosome. This Thermococcus kodakarensis (strain ATCC BAA-918 / JCM 12380 / KOD1) (Pyrococcus kodakaraensis (strain KOD1)) protein is Large ribosomal subunit protein uL2.